The primary structure comprises 168 residues: S-ribosylhomocysteine lyase (168 aa).

The Fe cation site is built by His54, His58, and Cys128.

It belongs to the LuxS family. As to quaternary structure, homodimer. It depends on Fe cation as a cofactor.

It catalyses the reaction S-(5-deoxy-D-ribos-5-yl)-L-homocysteine = (S)-4,5-dihydroxypentane-2,3-dione + L-homocysteine. Its function is as follows. Involved in the synthesis of autoinducer 2 (AI-2) which is secreted by bacteria and is used to communicate both the cell density and the metabolic potential of the environment. The regulation of gene expression in response to changes in cell density is called quorum sensing. Catalyzes the transformation of S-ribosylhomocysteine (RHC) to homocysteine (HC) and 4,5-dihydroxy-2,3-pentadione (DPD). This is S-ribosylhomocysteine lyase from Neisseria gonorrhoeae (strain ATCC 700825 / FA 1090).